Reading from the N-terminus, the 1976-residue chain is Putative callose synthase 8 (1976 aa).

At 1-530 (MSHEIVPVDP…FWQIFRSFDR (530 aa)) the chain is on the cytoplasmic side. A helical transmembrane segment spans residues 531-551 (MWSFFVLSLQALIIMACHDVG). Residues 552 to 565 (SPLQVFNANIFEDV) are Extracellular-facing. A helical membrane pass occupies residues 566 to 586 (MSIFITSAILKLIKGILDIIF). At 587 to 602 (KWKARNTMPINEKKKR) the chain is on the cytoplasmic side. The helical transmembrane segment at 603-623 (LVKLGFAAMWTIILPVLYSHS) threads the bilayer. Over 624–648 (RRKYICYFTNYKTWLGEWCFSPYMV) the chain is Extracellular. The helical transmembrane segment at 649–669 (AVTIYLTGSAIELVLFFVPAI) threads the bilayer. The Cytoplasmic segment spans residues 670 to 707 (SKYIETSNHGIFKTLSWWGQPRLYVGRGMQETQVSQFK). Residues 708–728 (YTFFWILVLLTKFAFSYAFEI) traverse the membrane as a helical segment. At 729–759 (KPLIEPTRLIMKVGVRNYEWHEIFPEVKSNA) the chain is on the extracellular side. The helical transmembrane segment at 760–780 (AAIVAVWAPIMVVYFMDTQIW) threads the bilayer. The Cytoplasmic portion of the chain corresponds to 781–1544 (YSVYCTIFGG…FDFFRMLSCY (764 aa)). A helical membrane pass occupies residues 1545–1565 (FTTIGFYFSSLISVIGIYIYL). At 1566–1595 (YGQLYLVLSGLQKTLILEAKVKNIKSLETA) the chain is on the extracellular side. Residues 1596–1616 (LASQSFIQLGLLTGLPMVMEI) traverse the membrane as a helical segment. Residues 1617–1620 (GLEK) are Cytoplasmic-facing. A helical transmembrane segment spans residues 1621 to 1641 (GFLIAFQDFILMQLQLAAFFF). The Extracellular portion of the chain corresponds to 1642–1688 (TFSLGTKTHYFGRTILHGGAKYRPTGRKVVVFHANFSENYRLYSRSH). Asn1676 carries an N-linked (GlcNAc...) asparagine glycan. A helical transmembrane segment spans residues 1689 to 1709 (FIKGFELMILLVVYELFKHTS). Topologically, residues 1710–1715 (QSNMAY) are cytoplasmic. Residues 1716–1736 (SFITFSVWFMSFTWLCAPFLF) form a helical membrane-spanning segment. The Extracellular portion of the chain corresponds to 1737–1790 (NPSGFTWEIIVGDWRDWNRWIKEQGGIGIQQDKSWQSWWNDEQAHLRGSGVGAR). The helical transmembrane segment at 1791–1811 (CLEIILSLRFFVYQYGLVYHL) threads the bilayer. The Cytoplasmic segment spans residues 1812–1819 (DITQSNTN). The chain crosses the membrane as a helical span at residues 1820-1840 (IIVYALSWVVILATFFTVKAV). Over 1841-1856 (DLGRQLFSTRKHLVFR) the chain is Extracellular. The chain crosses the membrane as a helical span at residues 1857-1877 (FFKVFVFVSILTIIITLANIC). The Cytoplasmic segment spans residues 1878 to 1884 (HLSVKDL). A helical membrane pass occupies residues 1885 to 1905 (LVSCLAFLPTGWGLILIAQAV). Topologically, residues 1906-1928 (RPKIEGTSLWEFTQVLARAYDYG) are extracellular. A helical transmembrane segment spans residues 1929-1949 (MGVVLFAPMAILAWLPIISAF). Residues 1950–1976 (QTRFLFNEAFNRRLQIQPILAGKKKNR) are Cytoplasmic-facing.

The protein belongs to the glycosyltransferase 48 family.

The protein localises to the cell membrane. It catalyses the reaction [(1-&gt;3)-beta-D-glucosyl](n) + UDP-alpha-D-glucose = [(1-&gt;3)-beta-D-glucosyl](n+1) + UDP + H(+). Its function is as follows. Involved in callose synthesis at the forming cell plate during cytokinesis. During plant growth and development, callose is found as a transitory component of the cell plate in dividing cells, is a major component of pollen mother cell walls and pollen tubes, and is found as a structural component of plasmodesmatal canals. The polypeptide is Putative callose synthase 8 (CALS8) (Arabidopsis thaliana (Mouse-ear cress)).